A 726-amino-acid chain; its full sequence is Catalase-peroxidase (726 aa).

The tract at residues 1–33 (MSTTDDTHNTLSTGKCPFHQGGHDRSAGAGTAS) is disordered. Positions 105 to 226 (WHGAGTYRSI…LGATEMGLIY (122 aa)) form a cross-link, tryptophyl-tyrosyl-methioninium (Trp-Tyr) (with M-252). The active-site Proton acceptor is H106. A cross-link (tryptophyl-tyrosyl-methioninium (Tyr-Met) (with W-105)) is located at residues 226 to 252 (YVNPEGPDHSGEPLSAAAAIRATFGNM). H267 is a binding site for heme b.

The protein belongs to the peroxidase family. Peroxidase/catalase subfamily. As to quaternary structure, homodimer or homotetramer. Requires heme b as cofactor. Formation of the three residue Trp-Tyr-Met cross-link is important for the catalase, but not the peroxidase activity of the enzyme.

The catalysed reaction is H2O2 + AH2 = A + 2 H2O. It carries out the reaction 2 H2O2 = O2 + 2 H2O. Its function is as follows. Bifunctional enzyme with both catalase and broad-spectrum peroxidase activity. The polypeptide is Catalase-peroxidase (Salmonella paratyphi A (strain ATCC 9150 / SARB42)).